A 231-amino-acid chain; its full sequence is 2,3-bisphosphoglycerate-dependent phosphoglycerate mutase (231 aa).

Substrate contacts are provided by residues 10-17, 23-24, arginine 62, 89-92, lysine 100, 116-117, and 185-186; these read RHGQSEWN, TG, ERHY, RR, and GN. Histidine 11 serves as the catalytic Tele-phosphohistidine intermediate. Catalysis depends on glutamate 89, which acts as the Proton donor/acceptor.

It belongs to the phosphoglycerate mutase family. BPG-dependent PGAM subfamily. As to quaternary structure, homodimer.

It carries out the reaction (2R)-2-phosphoglycerate = (2R)-3-phosphoglycerate. It functions in the pathway carbohydrate degradation; glycolysis; pyruvate from D-glyceraldehyde 3-phosphate: step 3/5. Catalyzes the interconversion of 2-phosphoglycerate and 3-phosphoglycerate. The sequence is that of 2,3-bisphosphoglycerate-dependent phosphoglycerate mutase from Buchnera aphidicola subsp. Acyrthosiphon pisum (strain 5A).